A 326-amino-acid polypeptide reads, in one-letter code: Malate dehydrogenase (326 aa).

Residue G11–G17 coordinates NAD(+). Substrate-binding residues include R92 and R98. NAD(+) is bound by residues N105, Q112, and V129 to N131. Residues N131 and R162 each coordinate substrate. The active-site Proton acceptor is H187.

The protein belongs to the LDH/MDH superfamily. MDH type 2 family.

The enzyme catalyses (S)-malate + NAD(+) = oxaloacetate + NADH + H(+). In terms of biological role, catalyzes the reversible oxidation of malate to oxaloacetate. This Leptospira borgpetersenii serovar Hardjo-bovis (strain JB197) protein is Malate dehydrogenase.